We begin with the raw amino-acid sequence, 1465 residues long: DNA polymerase III PolC-type (1465 aa).

Positions 425–581 (YVVFDVETTG…YDAEATGRLL (157 aa)) constitute an Exonuclease domain.

It belongs to the DNA polymerase type-C family. PolC subfamily.

The protein localises to the cytoplasm. The enzyme catalyses DNA(n) + a 2'-deoxyribonucleoside 5'-triphosphate = DNA(n+1) + diphosphate. In terms of biological role, required for replicative DNA synthesis. This DNA polymerase also exhibits 3' to 5' exonuclease activity. The protein is DNA polymerase III PolC-type of Streptococcus mutans serotype c (strain ATCC 700610 / UA159).